The following is a 277-amino-acid chain: Small ribosomal subunit protein uS3 (277 aa).

One can recognise a KH type-2 domain in the interval 38-106 (IRRLLATGLE…QVQLNILEVK (69 aa)). The interval 217 to 277 (AGVEAGRGAP…SAPSAETTES (61 aa)) is disordered. A compositionally biased stretch (basic and acidic residues) spans 225 to 235 (APDRPRRERPA). Low complexity predominate over residues 242–261 (SGSSGTTATSTEAGRAAAET).

It belongs to the universal ribosomal protein uS3 family. As to quaternary structure, part of the 30S ribosomal subunit. Forms a tight complex with proteins S10 and S14.

In terms of biological role, binds the lower part of the 30S subunit head. Binds mRNA in the 70S ribosome, positioning it for translation. This is Small ribosomal subunit protein uS3 from Mycobacteroides abscessus (strain ATCC 19977 / DSM 44196 / CCUG 20993 / CIP 104536 / JCM 13569 / NCTC 13031 / TMC 1543 / L948) (Mycobacterium abscessus).